The following is a 200-amino-acid chain: ATP synthase subunit s, mitochondrial (200 aa).

Residues 1 to 25 (MMLFGKISQQLCGVKKLPWSCDSRY) constitute a mitochondrion transit peptide. An N-terminal domain region spans residues 1-61 (MMLFGKISQQ…SEWLLRCGAM (61 aa)). Mg(2+) is bound at residue Gly-59. 4 LRR repeats span residues 62-87 (VRYHGQERWQKDYNHLPTGPLDKYKI), 88-116 (QAIDATDSCIMSIGFDHMEGLEHVEKIRL), 117-141 (CKCHYIEDDCLLRLSQLENLQKTIL), and 142-173 (EMEIISCGNITDKGIIALLHLRNLKYLLLSDL). Mg(2+) is bound at residue Thr-93.

It belongs to the ATP synthase subunit s family. Homotetramer. Associates with ATP synthase.

It localises to the mitochondrion. Its subcellular location is the mitochondrion inner membrane. Functionally, involved in regulation of mitochondrial membrane ATP synthase. Necessary for H(+) conduction of ATP synthase. Facilitates energy-driven catalysis of ATP synthesis by blocking a proton leak through an alternative proton exit pathway. This chain is ATP synthase subunit s, mitochondrial (DMAC2L), found in Pongo abelii (Sumatran orangutan).